Reading from the N-terminus, the 250-residue chain is 3-deoxy-manno-octulosonate cytidylyltransferase (250 aa).

It belongs to the KdsB family.

It is found in the cytoplasm. It catalyses the reaction 3-deoxy-alpha-D-manno-oct-2-ulosonate + CTP = CMP-3-deoxy-beta-D-manno-octulosonate + diphosphate. The protein operates within nucleotide-sugar biosynthesis; CMP-3-deoxy-D-manno-octulosonate biosynthesis; CMP-3-deoxy-D-manno-octulosonate from 3-deoxy-D-manno-octulosonate and CTP: step 1/1. It functions in the pathway bacterial outer membrane biogenesis; lipopolysaccharide biosynthesis. Activates KDO (a required 8-carbon sugar) for incorporation into bacterial lipopolysaccharide in Gram-negative bacteria. The sequence is that of 3-deoxy-manno-octulosonate cytidylyltransferase from Yersinia pseudotuberculosis serotype O:1b (strain IP 31758).